Reading from the N-terminus, the 241-residue chain is tRNA (guanine-N(1)-)-methyltransferase (241 aa).

S-adenosyl-L-methionine is bound by residues Gly123 and 143 to 148 (IGDYVL).

Belongs to the RNA methyltransferase TrmD family. In terms of assembly, homodimer.

It is found in the cytoplasm. The catalysed reaction is guanosine(37) in tRNA + S-adenosyl-L-methionine = N(1)-methylguanosine(37) in tRNA + S-adenosyl-L-homocysteine + H(+). Its function is as follows. Specifically methylates guanosine-37 in various tRNAs. The protein is tRNA (guanine-N(1)-)-methyltransferase of Roseobacter denitrificans (strain ATCC 33942 / OCh 114) (Erythrobacter sp. (strain OCh 114)).